The sequence spans 172 residues: Myosin regulatory light polypeptide 9 (172 aa).

A compositionally biased stretch (basic residues) spans 1 to 16; sequence MSSKRAKAKTTKKRPQ. The disordered stretch occupies residues 1–20; it reads MSSKRAKAKTTKKRPQRATS. Ser2 is modified (N-acetylserine). A Phosphothreonine; by MLCK, CIT and ROCK2 modification is found at Thr19. Phosphoserine; by CDC42BP, CIT, MLCK, PAK1, ROCK1, ROCK2, DAPK1, DAPK2 and ZIPK/DAPK3 is present on Ser20. 3 consecutive EF-hand domains span residues 29–64, 98–133, and 134–169; these read SQIQ…LGKN, DPED…MGDR, and FTDE…GAKD. Asp42, Asn44, Asp46, and Asp53 together coordinate Ca(2+).

Myosin is a hexamer of 2 heavy chains and 4 light chains: interacts with myosin heavy chain MYO19. Interacts with LUZP1; the interaction results in inhibition of phosphorylation of MYL9 by DAPK3. Phosphorylation increases the actin-activated myosin ATPase activity and thereby regulates the contractile activity. It is required to generate the driving force in the migration of the cells but not necessary for localization of myosin-2 at the leading edge. Phosphorylation is required for myotube formation. Phosphorylated by DAPK3; DAPK3-mediated phosphorylation is inhibited by LUZP1. As to expression, smooth muscle tissues and in some, but not all, nonmuscle cells.

It is found in the cytoplasm. It localises to the cytoskeleton. Its subcellular location is the cell cortex. Functionally, myosin regulatory subunit that plays an important role in regulation of both smooth muscle and nonmuscle cell contractile activity via its phosphorylation. Implicated in cytokinesis, receptor capping, and cell locomotion. In myoblasts, may regulate PIEZO1-dependent cortical actomyosin assembly involved in myotube formation. The chain is Myosin regulatory light polypeptide 9 (MYL9) from Homo sapiens (Human).